Here is a 140-residue protein sequence, read N- to C-terminus: ATP synthase epsilon chain (140 aa).

Belongs to the ATPase epsilon chain family. As to quaternary structure, F-type ATPases have 2 components, CF(1) - the catalytic core - and CF(0) - the membrane proton channel. CF(1) has five subunits: alpha(3), beta(3), gamma(1), delta(1), epsilon(1). CF(0) has three main subunits: a, b and c.

The protein localises to the cell inner membrane. Produces ATP from ADP in the presence of a proton gradient across the membrane. This chain is ATP synthase epsilon chain (atpC), found in Vibrio alginolyticus.